The sequence spans 226 residues: Large ribosomal subunit protein uL3 (226 aa).

The protein belongs to the universal ribosomal protein uL3 family. In terms of assembly, part of the 50S ribosomal subunit. Forms a cluster with proteins L14 and L19.

One of the primary rRNA binding proteins, it binds directly near the 3'-end of the 23S rRNA, where it nucleates assembly of the 50S subunit. The sequence is that of Large ribosomal subunit protein uL3 from Sulfurihydrogenibium sp. (strain YO3AOP1).